Reading from the N-terminus, the 199-residue chain is Sulfocyanin (199 aa).

The chain crosses the membrane as a helical; Signal-anchor for type II membrane protein span at residues 7–27; the sequence is VLPVVVGILVVIIAVAVGVYV. A Plastocyanin-like domain is found at 79–188; sequence NFNGTSSGSL…SGMWAVLVAS (110 aa). Positions 110, 171, 176, and 181 each coordinate Cu cation.

The protein belongs to the multicopper oxidase family.

It is found in the cell membrane. Functionally, the 4 redox proteins SoxE, SoxF, SoxG and SoxH probably form part of a membrane respiratory complex together with SoxM, a catalytic subunit of cytochrome oxidase. The polypeptide is Sulfocyanin (soxE) (Sulfolobus acidocaldarius (strain ATCC 33909 / DSM 639 / JCM 8929 / NBRC 15157 / NCIMB 11770)).